The chain runs to 989 residues: Protease PrtH (989 aa).

2 repeats span residues 270-323 and 528-581; these read TPTD…KCVN and SPAS…VCVD. Positions 969-989 are disordered; sequence PRDTPWRYGKRELPPSASGMR.

Belongs to the peptidase C25 family.

The protein localises to the cytoplasmic vesicle. In terms of biological role, cleaves human complement component C3. May enable P.gingivalis to evade complement-mediated killing during the immune response. Plays an important role in soft tissue infections and is a virulence factor. The protein is Protease PrtH (prtH) of Porphyromonas gingivalis (strain ATCC BAA-308 / W83).